The primary structure comprises 229 residues: ATP synthase subunit a (229 aa).

The next 6 helical transmembrane spans lie at A25 to A45, F82 to V102, G104 to V124, F142 to L162, L181 to M201, and G202 to Q222.

Belongs to the ATPase A chain family. As to quaternary structure, F-type ATPases have 2 components, CF(1) - the catalytic core - and CF(0) - the membrane proton channel. CF(1) has five subunits: alpha(3), beta(3), gamma(1), delta(1), epsilon(1). CF(0) has three main subunits: a(1), b(2) and c(9-12). The alpha and beta chains form an alternating ring which encloses part of the gamma chain. CF(1) is attached to CF(0) by a central stalk formed by the gamma and epsilon chains, while a peripheral stalk is formed by the delta and b chains.

Its subcellular location is the cell inner membrane. Its function is as follows. Key component of the proton channel; it plays a direct role in the translocation of protons across the membrane. The polypeptide is ATP synthase subunit a (Citrifermentans bemidjiense (strain ATCC BAA-1014 / DSM 16622 / JCM 12645 / Bem) (Geobacter bemidjiensis)).